Consider the following 314-residue polypeptide: CD-NTase-associated protein 12 (314 aa).

One can recognise a TIR domain in the interval 5 to 129 (RIFIGSSSEE…VKGISLARFK (125 aa)). An STING domain region spans residues 160–314 (SSTLAAVYYE…DLIKIVDEDN (155 aa)). 3',3'-c-di-GMP contacts are provided by F171, P234, and D252.

The protein in the C-terminal section; belongs to the bacterial STING family. Homodimer. Forms homodimers; in the presence of c-di-GMP forms filaments with an ordered array of parallel-stacked subunits.

The enzyme catalyses NAD(+) + H2O = ADP-D-ribose + nicotinamide + H(+). Its activity is regulated as follows. NAD(+) hydrolase activity is strongly stimulated by c-di-GMP, weakly by 3'3'-cGAMP, very weakly by c-di-AMP but not at all by 2'3'-cGAMP. Self-association of TIR domains is required for NADase activity. Functionally, effector protein of a CBASS antiviral system with NAD(+) hydrolase activity. CBASS (cyclic oligonucleotide-based antiphage signaling system) provides immunity against bacteriophage. The CD-NTase protein synthesizes cyclic nucleotides in response to infection; these serve as specific second messenger signals. The signals activate a diverse range of effectors, leading to bacterial cell death and thus abortive phage infection. A type I-(GG) CBASS system. Binds c-di-GMP (synthesized by the cognate CdnE encoded upstream in the same operon), and about 10-fold less well 3'3'-cGAMP, but not c-di-AMP, 2'-3'-cGAMP or cUMP-AMP (tested without the N-terminal TIR domain). Upon activation by c-di-GMP forms filaments which hydrolyze NAD(+); filament formation is required for enzyme activation. The protein is CD-NTase-associated protein 12 of Capnocytophaga granulosa (strain ATCC 51502 / DSM 11449 / JCM 8566 / LMG 16022 / NCTC 12948 / B0611).